Here is a 263-residue protein sequence, read N- to C-terminus: Trem-like transcript 4 protein (263 aa).

The N-terminal stretch at 1–28 (MAWRYSQLLLVPVQLVFLASVCCPGVWG) is a signal peptide. Positions 29–132 (STVSEELHRM…LREVTVLRNI (104 aa)) constitute an Ig-like V-type domain. Residues 29–200 (STVSEELHRM…GWTSPGLLVS (172 aa)) are Extracellular-facing. The cysteines at positions 47 and 116 are disulfide-linked. An N-linked (GlcNAc...) asparagine glycan is attached at N100. A disordered region spans residues 168–191 (SPEETTDSSINGTGHRNQSSSSPG). The helical transmembrane segment at 201–221 (VQYGLLLLKALMLSVFCVLLC) threads the bilayer. Residues 222–263 (WRSGQGREYMAETMELSKLPHISKSLDTVSHISGYEKKANWY) lie on the Cytoplasmic side of the membrane.

In terms of assembly, interacts with TYROBP/DAP12. In terms of tissue distribution, predominantly expressed in spleen, with highest levels on selected populations of macrophages, including red pulp macrophages, and on subsets of dendritic cells (DC), mostly on CD8alpha(+) DC (at protein level). Also expressed on blood and spleen Ly6C(low) monocytes (at protein level). Not expressed on lymphocytes or granulocytes (at protein level).

It is found in the cell membrane. Its function is as follows. Positively regulates Toll-like receptor signaling via TLR7, TLR9 and TLR13 in neutrophils and splenic macrophages. Regulates TLR7 signaling by controlling ligand-induced recruitment of TLR7 from the endoplasmic reticulum to endosomes and lysosomes. Positively regulates Toll-like receptor TLR9-induced production of inflammatory cytokines but is dispensable for IFNB1 production. Involved in the anti-viral response to several viruses including influenza virus, vesicular stomatitis virus and cytomegalovirus. Binds to late apoptotic, and necrotic cells, but not living or early apoptotic cells, but is not essential for uptake of dying cells by dendritic cells (DCs). Does not bind nucleic acids. May participate in antigen presentation. In Mus musculus (Mouse), this protein is Trem-like transcript 4 protein (Treml4).